We begin with the raw amino-acid sequence, 416 residues long: Glutamyl-tRNA reductase (416 aa).

Residues 49 to 52, serine 105, 110 to 112, and glutamine 116 contribute to the substrate site; these read TCNR and EPQ. The active-site Nucleophile is the cysteine 50. NADP(+) is bound at residue 185–190; that stretch reads GAGETI.

Belongs to the glutamyl-tRNA reductase family. In terms of assembly, homodimer.

It carries out the reaction (S)-4-amino-5-oxopentanoate + tRNA(Glu) + NADP(+) = L-glutamyl-tRNA(Glu) + NADPH + H(+). Its pathway is porphyrin-containing compound metabolism; protoporphyrin-IX biosynthesis; 5-aminolevulinate from L-glutamyl-tRNA(Glu): step 1/2. Functionally, catalyzes the NADPH-dependent reduction of glutamyl-tRNA(Glu) to glutamate 1-semialdehyde (GSA). This is Glutamyl-tRNA reductase from Shewanella denitrificans (strain OS217 / ATCC BAA-1090 / DSM 15013).